The following is a 244-amino-acid chain: Coenzyme Q-binding protein COQ10 homolog B, mitochondrial (244 aa).

It belongs to the COQ10 family. As to quaternary structure, interacts with coenzyme Q.

It is found in the mitochondrion inner membrane. In terms of biological role, required for the function of coenzyme Q in the respiratory chain. May serve as a chaperone or may be involved in the transport of Q6 from its site of synthesis to the catalytic sites of the respiratory complexes. The sequence is that of Coenzyme Q-binding protein COQ10 homolog B, mitochondrial (coq10b) from Xenopus laevis (African clawed frog).